The sequence spans 387 residues: Protein REVEILLE 1 (387 aa).

Composition is skewed to polar residues over residues 1–17 (MASS…NASL) and 27–37 (KQIQFNDQSFG). The tract at residues 1-44 (MASSPLTANVQGTNASLRNRDEETADKQIQFNDQSFGGNDYAPK) is disordered. The HTH myb-type domain maps to 50-104 (TITKERERWTDEEHKKFVEALKLYGRAWRRIEEHVGSKTAVQIRSHAQKFFSKVA). A DNA-binding region (H-T-H motif) is located at residues 77–100 (WRRIEEHVGSKTAVQIRSHAQKFF). Disordered regions lie at residues 105 to 200 (REAT…TANA), 306 to 334 (KAVQ…TTEP), and 350 to 387 (AFSE…HLHL). The segment covering 124-134 (RPKRKPAHPYP) has biased composition (basic residues). Residues 141 to 166 (ADQTSRSVSPSERDTQSPTSVLSTVG) are compositionally biased toward polar residues. Composition is skewed to low complexity over residues 172–200 (SLDS…TANA) and 312–323 (GSSTGSNTGSVD). Over residues 324 to 333 (DTGHTEKTTE) the composition is skewed to basic and acidic residues.

The protein resides in the nucleus. Morning-phased transcription factor integrating the circadian clock and auxin pathways. Binds to the evening element (EE) of promoters. Does not act within the central clock, but regulates free auxin levels in a time-of-day specific manner. Positively regulates the expression of YUC8 during the day, but has no effect during the night. Negative regulator of freezing tolerance. This Arabidopsis thaliana (Mouse-ear cress) protein is Protein REVEILLE 1 (RVE1).